We begin with the raw amino-acid sequence, 219 residues long: Probable N-acetyltransferase camello (219 aa).

The next 2 membrane-spanning stretches (helical) occupy residues 42-62 (FYFI…SYVL) and 64-84 (LTSL…EFHG). Residues 62 to 218 (LSLTSLVALL…TVIYYRYDIK (157 aa)) form the N-acetyltransferase domain.

The protein belongs to the camello family. As to expression, at the beginning of gastrulation, expressed in deep cells of the presumptive mesoderm. At later gastrulation stages, expressed at the interface between already involuted and preinvoluted mesoderm. At late neurula and tailbud stages, expressed in the deep mass of cells lying ventrally and laterally to the closed blastopore.

Its subcellular location is the golgi apparatus membrane. Functionally, plays a role in regulation of gastrulation, possibly by controlled reduction of cell adhesion which is necessary for optimal cell motility. The chain is Probable N-acetyltransferase camello from Xenopus laevis (African clawed frog).